The primary structure comprises 362 residues: Peptide chain release factor 1 (362 aa).

At Gln-237 the chain carries N5-methylglutamine.

It belongs to the prokaryotic/mitochondrial release factor family. In terms of processing, methylated by PrmC. Methylation increases the termination efficiency of RF1.

The protein resides in the cytoplasm. Peptide chain release factor 1 directs the termination of translation in response to the peptide chain termination codons UAG and UAA. In Vibrio atlanticus (strain LGP32) (Vibrio splendidus (strain Mel32)), this protein is Peptide chain release factor 1.